Reading from the N-terminus, the 615-residue chain is Elongation factor 4 (615 aa).

The tr-type G domain occupies 14–200 (SKIRNFCIIA…KVAELIPAPT (187 aa)). GTP is bound by residues 26-31 (DHGKST) and 147-150 (NKID).

This sequence belongs to the TRAFAC class translation factor GTPase superfamily. Classic translation factor GTPase family. LepA subfamily.

Its subcellular location is the cell membrane. It catalyses the reaction GTP + H2O = GDP + phosphate + H(+). In terms of biological role, required for accurate and efficient protein synthesis under certain stress conditions. May act as a fidelity factor of the translation reaction, by catalyzing a one-codon backward translocation of tRNAs on improperly translocated ribosomes. Back-translocation proceeds from a post-translocation (POST) complex to a pre-translocation (PRE) complex, thus giving elongation factor G a second chance to translocate the tRNAs correctly. Binds to ribosomes in a GTP-dependent manner. This is Elongation factor 4 from Corynebacterium aurimucosum (strain ATCC 700975 / DSM 44827 / CIP 107346 / CN-1) (Corynebacterium nigricans).